Here is a 96-residue protein sequence, read N- to C-terminus: Co-chaperonin GroES (96 aa).

The protein belongs to the GroES chaperonin family. As to quaternary structure, heptamer of 7 subunits arranged in a ring. Interacts with the chaperonin GroEL.

Its subcellular location is the cytoplasm. Functionally, together with the chaperonin GroEL, plays an essential role in assisting protein folding. The GroEL-GroES system forms a nano-cage that allows encapsulation of the non-native substrate proteins and provides a physical environment optimized to promote and accelerate protein folding. GroES binds to the apical surface of the GroEL ring, thereby capping the opening of the GroEL channel. This is Co-chaperonin GroES from Leptospira borgpetersenii serovar Hardjo-bovis (strain JB197).